The primary structure comprises 328 residues: Phosphate acyltransferase (328 aa).

The protein belongs to the PlsX family. As to quaternary structure, homodimer. Probably interacts with PlsY.

The protein resides in the cytoplasm. It catalyses the reaction a fatty acyl-[ACP] + phosphate = an acyl phosphate + holo-[ACP]. The protein operates within lipid metabolism; phospholipid metabolism. Its function is as follows. Catalyzes the reversible formation of acyl-phosphate (acyl-PO(4)) from acyl-[acyl-carrier-protein] (acyl-ACP). This enzyme utilizes acyl-ACP as fatty acyl donor, but not acyl-CoA. In Staphylococcus aureus (strain Mu3 / ATCC 700698), this protein is Phosphate acyltransferase.